The following is a 358-amino-acid chain: 4-hydroxy-3-methylbut-2-en-1-yl diphosphate synthase (flavodoxin) (358 aa).

Positions 264, 267, 299, and 306 each coordinate [4Fe-4S] cluster.

It belongs to the IspG family. Requires [4Fe-4S] cluster as cofactor.

The enzyme catalyses (2E)-4-hydroxy-3-methylbut-2-enyl diphosphate + oxidized [flavodoxin] + H2O + 2 H(+) = 2-C-methyl-D-erythritol 2,4-cyclic diphosphate + reduced [flavodoxin]. Its pathway is isoprenoid biosynthesis; isopentenyl diphosphate biosynthesis via DXP pathway; isopentenyl diphosphate from 1-deoxy-D-xylulose 5-phosphate: step 5/6. In terms of biological role, converts 2C-methyl-D-erythritol 2,4-cyclodiphosphate (ME-2,4cPP) into 1-hydroxy-2-methyl-2-(E)-butenyl 4-diphosphate. This Helicobacter acinonychis (strain Sheeba) protein is 4-hydroxy-3-methylbut-2-en-1-yl diphosphate synthase (flavodoxin).